Reading from the N-terminus, the 56-residue chain is MFRFIKDSILELKKVTWPKYNEVVGNGKQVFWLVLFVSIFLGIVDYLMFLVVTYVF.

Residues 30–50 (VFWLVLFVSIFLGIVDYLMFL) traverse the membrane as a helical segment.

It belongs to the SecE/SEC61-gamma family. In terms of assembly, component of the Sec protein translocase complex. Heterotrimer consisting of SecY, SecE and SecG subunits. The heterotrimers can form oligomers, although 1 heterotrimer is thought to be able to translocate proteins. Interacts with the ribosome. Interacts with SecDF, and other proteins may be involved. Interacts with SecA.

It localises to the cell inner membrane. Functionally, essential subunit of the Sec protein translocation channel SecYEG. Clamps together the 2 halves of SecY. May contact the channel plug during translocation. This Borreliella burgdorferi (strain ATCC 35210 / DSM 4680 / CIP 102532 / B31) (Borrelia burgdorferi) protein is Protein translocase subunit SecE.